A 264-amino-acid chain; its full sequence is JmjC domain-containing protein 8 (264 aa).

The signal sequence occupies residues 1-23 (MAPASRLLALWALAAVALPGSGA). N-linked (GlcNAc...) asparagine glycans are attached at residues N130, N140, and N209. Residues 131 to 264 (DTLYFFGDNN…TSVFISTFLG (134 aa)) form the JmjC domain.

Oligomer. Dimer. Interacts with PKM; regulates angiogenesis and metabolism. Post-translationally, N-glycosylated.

The protein resides in the endoplasmic reticulum lumen. It localises to the cytoplasm. Its function is as follows. Functions as a positive regulator of TNF-induced NF-kappa-B signaling. Regulates angiogenesis and cellular metabolism through interaction with PKM. In Homo sapiens (Human), this protein is JmjC domain-containing protein 8.